Consider the following 186-residue polypeptide: Holliday junction branch migration complex subunit RuvA (186 aa).

A domain I region spans residues 1-61; the sequence is MYRYIKGIVT…EDIFQLYGFK (61 aa). The interval 62 to 134 is domain II; that stretch reads DEETLNLFLK…LKGKLVNDEL (73 aa). Residues 134-137 form a flexible linker region; the sequence is LDMQ. Residues 138–186 form a domain III region; it reads LLSDNSKDVAAALEALGYNKKEIAKSLKHVNFDQDLNKALKEALAILLK.

It belongs to the RuvA family. Homotetramer. Forms an RuvA(8)-RuvB(12)-Holliday junction (HJ) complex. HJ DNA is sandwiched between 2 RuvA tetramers; dsDNA enters through RuvA and exits via RuvB. An RuvB hexamer assembles on each DNA strand where it exits the tetramer. Each RuvB hexamer is contacted by two RuvA subunits (via domain III) on 2 adjacent RuvB subunits; this complex drives branch migration. In the full resolvosome a probable DNA-RuvA(4)-RuvB(12)-RuvC(2) complex forms which resolves the HJ.

Its subcellular location is the cytoplasm. The RuvA-RuvB-RuvC complex processes Holliday junction (HJ) DNA during genetic recombination and DNA repair, while the RuvA-RuvB complex plays an important role in the rescue of blocked DNA replication forks via replication fork reversal (RFR). RuvA specifically binds to HJ cruciform DNA, conferring on it an open structure. The RuvB hexamer acts as an ATP-dependent pump, pulling dsDNA into and through the RuvAB complex. HJ branch migration allows RuvC to scan DNA until it finds its consensus sequence, where it cleaves and resolves the cruciform DNA. The chain is Holliday junction branch migration complex subunit RuvA from Acholeplasma laidlawii (strain PG-8A).